The primary structure comprises 313 residues: Ras-related GTP-binding protein A (313 aa).

GTP contacts are provided by S16, G17, G19, K20, T21, S22, T36, T42, G65, and H127. Residues G17, G19, K20, T21, and S22 each coordinate GDP. Positions 127 and 130 each coordinate GDP. Residue K142 forms a Glycyl lysine isopeptide (Lys-Gly) (interchain with G-Cter in ubiquitin) linkage. 2 residues coordinate GDP: L148 and I164. GTP is bound at residue I164. Residues K220, K230, and K244 each participate in a glycyl lysine isopeptide (Lys-Gly) (interchain with G-Cter in ubiquitin) cross-link. S309 is subject to Phosphoserine.

Belongs to the GTR/RAG GTP-binding protein family. Can occur as a homodimer or as a heterodimer with RRAGC or RRAGD in a sequence-independent manner; heterodimerization stabilizes proteins of the heterodimer. The GTP-bound form of RRAGA (in complex with the GDP-bound form of RRAGC or RRAGD) interacts with RPTOR, thereby promoting recruitment of mTORC1 to the lysosomes. The Rag heterodimer interacts with SLC38A9; the probable amino acid sensor. The Rag heterodimer interacts with the Ragulator complex. The GTP-bound form of RRAGA interacts with NOL8. Component of the lysosomal folliculin complex (LFC), composed of FLCN, FNIP1 (or FNIP2), RagA/RRAGA or RagB/RRAGB GDP-bound, RagC/RRAGC or RagD/RRAGD GTP-bound, and Ragulator. Interacts with SH3BP4; the interaction with this negative regulator is most probably direct, preferentially occurs with the inactive GDP-bound form of RRAGA and is negatively regulated by amino acids. Interacts (polyubiquitinated) with TSC2. Interacts with SESN1, SESN2 and SESN3. Interacts with PIP4P1. Interacts with GPR137B. Interacts with WDR83; this interaction regulates the spatiotemporal localization of mTORC1 to the lysosomal surface. Polybiquitinated via 'Lys-63'-linked polyubiquitination by RNF152 in response to amino acid starvation: polyubiquitination of the GDP-bound inactive form by RNF152 promotes RRAGA inactivation and interaction with the GATOR1 complex. This does not affect RRAGA degradation.

The protein localises to the cytoplasm. The protein resides in the nucleus. Its subcellular location is the lysosome membrane. It catalyses the reaction GTP + H2O = GDP + phosphate + H(+). Its activity is regulated as follows. The activation of GTP-binding proteins is generally mediated by a guanine exchange factor (GEF), while inactivation through hydrolysis of bound GTP is catalyzed by a GTPase activating protein (GAP). The Ragulator complex functions as a GEF and promotes the active GTP-bound form. The GATOR1 complex functions as a GAP and stimulates RRAGA GTPase activity to turn it into its inactive GDP-bound form, preventing mTORC1 recruitment and activation. Its function is as follows. Guanine nucleotide-binding protein that plays a crucial role in the cellular response to amino acid availability through regulation of the mTORC1 signaling cascade. Forms heterodimeric Rag complexes with RagC/RRAGC or RagD/RRAGD and cycles between an inactive GDP-bound and an active GTP-bound form: RagA/RRAGA is in its active form when GTP-bound RagA/RRAGA forms a complex with GDP-bound RagC/RRAGC (or RagD/RRAGD) and in an inactive form when GDP-bound RagA/RRAGA heterodimerizes with GTP-bound RagC/RRAGC (or RagD/RRAGD). In its GTP-bound active form, promotes the recruitment of mTORC1 to the lysosomes and its subsequent activation by the GTPase RHEB. Involved in the RCC1/Ran-GTPase pathway. May play a direct role in a TNF-alpha signaling pathway leading to induction of cell death. In Bos taurus (Bovine), this protein is Ras-related GTP-binding protein A.